The sequence spans 248 residues: MLRTSFQGVARLVRHKALYRSPCLLPRVHLASAFGSSTESLVARFCPEKTDLKDYALPNASWCSDMLSLYQEFLEKTKSGGWIKLPSFKSNRDHIQGLKLPFGLETASDKQDWRLFTRSIQLEGQGYEYVIFFHPSEKKSVCLFQPGPYLEGAPGFAHGGSLAALMDETYSKTAYLAGEGLFTLSLNIKFKNLIPVGSLAVLDIQVEKIEDQKLYMSCIAQSRDKQTVYAKSSGVFLQLQLEEQSQEQ.

The active-site Proton donor/acceptor is the D167.

The protein belongs to the THEM4/THEM5 thioesterase family. Homodimer.

It is found in the mitochondrion matrix. It catalyses the reaction hexadecanoyl-CoA + H2O = hexadecanoate + CoA + H(+). The enzyme catalyses (9Z,12Z)-octadecadienoyl-CoA + H2O = (9Z,12Z)-octadecadienoate + CoA + H(+). It carries out the reaction tetradecanoyl-CoA + H2O = tetradecanoate + CoA + H(+). The catalysed reaction is (9Z)-octadecenoyl-CoA + H2O = (9Z)-octadecenoate + CoA + H(+). It catalyses the reaction (9Z)-hexadecenoyl-CoA + H2O = (9Z)-hexadecenoate + CoA + H(+). The enzyme catalyses (5Z,8Z,11Z,14Z)-eicosatetraenoyl-CoA + H2O = (5Z,8Z,11Z,14Z)-eicosatetraenoate + CoA + H(+). It carries out the reaction octadecanoyl-CoA + H2O = octadecanoate + CoA + H(+). Its function is as follows. Has acyl-CoA thioesterase activity towards long-chain (C16 and C18) fatty acyl-CoA substrates, with a preference for linoleoyl-CoA and other unsaturated long-chain fatty acid-CoA esters. Plays an important role in mitochondrial fatty acid metabolism, and in remodeling of the mitochondrial lipid cardiolipin. Required for normal mitochondrial function. This chain is Acyl-coenzyme A thioesterase THEM5 (Them5), found in Mus musculus (Mouse).